We begin with the raw amino-acid sequence, 338 residues long: Ketol-acid reductoisomerase (NADP(+)) (338 aa).

The KARI N-terminal Rossmann domain maps to 1–181 (MKVFYDKDAD…GGGKAGIIET (181 aa)). NADP(+)-binding positions include 24–27 (YGSQ), R47, and S52. H107 is an active-site residue. G133 serves as a coordination point for NADP(+). Residues 182 to 327 (NFREETETDL…EKLRAMMPWI (146 aa)) form the KARI C-terminal knotted domain. Residues D190, E194, E226, and E230 each contribute to the Mg(2+) site. S251 is a substrate binding site.

It belongs to the ketol-acid reductoisomerase family. The cofactor is Mg(2+).

It catalyses the reaction (2R)-2,3-dihydroxy-3-methylbutanoate + NADP(+) = (2S)-2-acetolactate + NADPH + H(+). The enzyme catalyses (2R,3R)-2,3-dihydroxy-3-methylpentanoate + NADP(+) = (S)-2-ethyl-2-hydroxy-3-oxobutanoate + NADPH + H(+). It participates in amino-acid biosynthesis; L-isoleucine biosynthesis; L-isoleucine from 2-oxobutanoate: step 2/4. The protein operates within amino-acid biosynthesis; L-valine biosynthesis; L-valine from pyruvate: step 2/4. Involved in the biosynthesis of branched-chain amino acids (BCAA). Catalyzes an alkyl-migration followed by a ketol-acid reduction of (S)-2-acetolactate (S2AL) to yield (R)-2,3-dihydroxy-isovalerate. In the isomerase reaction, S2AL is rearranged via a Mg-dependent methyl migration to produce 3-hydroxy-3-methyl-2-ketobutyrate (HMKB). In the reductase reaction, this 2-ketoacid undergoes a metal-dependent reduction by NADPH to yield (R)-2,3-dihydroxy-isovalerate. The protein is Ketol-acid reductoisomerase (NADP(+)) of Leptothrix cholodnii (strain ATCC 51168 / LMG 8142 / SP-6) (Leptothrix discophora (strain SP-6)).